A 315-amino-acid chain; its full sequence is Methionyl-tRNA formyltransferase (315 aa).

113-116 contacts (6S)-5,6,7,8-tetrahydrofolate; it reads SLLP.

Belongs to the Fmt family.

The catalysed reaction is L-methionyl-tRNA(fMet) + (6R)-10-formyltetrahydrofolate = N-formyl-L-methionyl-tRNA(fMet) + (6S)-5,6,7,8-tetrahydrofolate + H(+). Its function is as follows. Attaches a formyl group to the free amino group of methionyl-tRNA(fMet). The formyl group appears to play a dual role in the initiator identity of N-formylmethionyl-tRNA by promoting its recognition by IF2 and preventing the misappropriation of this tRNA by the elongation apparatus. This chain is Methionyl-tRNA formyltransferase, found in Escherichia coli O6:K15:H31 (strain 536 / UPEC).